A 343-amino-acid chain; its full sequence is MRRFFYRHTRGVTEVVVGRGLPYGEYIERPVVLAEEGLRPPIPGAPTLVLRGGEEVKSLEVLTKVYSFLKEVGADRSTTLVAVGGGALLDLATFAAGTYMRGIRLVHIPTTLLAMVDAALGGKGAVDWGPVKNLVGVFYQPAAILCDLSWLETLPERVYRSAFAEVVKYGLALDGDFYSWVRENAKALLARDWGALEYAVYRSLQLKAGVVEVDEFEERGIRQVLNVGHTVGHAVERVLGLLHGEAVAVGIVAELRLSSELGYLRESHVAEAAEVLSSLGLPTSVKATEQQLAEAAALVKFDKKRRGGHIYIPLVVRPGRWILEKIAVEEVEKAVRYVLHQGG.

NAD(+) contacts are provided by residues 86 to 90, 110 to 111, Lys-123, and Lys-132; these read GALLD and TT. Glu-165, His-229, and His-243 together coordinate Zn(2+).

It belongs to the sugar phosphate cyclases superfamily. Dehydroquinate synthase family. Requires Co(2+) as cofactor. It depends on Zn(2+) as a cofactor. NAD(+) is required as a cofactor.

The protein resides in the cytoplasm. It catalyses the reaction 7-phospho-2-dehydro-3-deoxy-D-arabino-heptonate = 3-dehydroquinate + phosphate. The protein operates within metabolic intermediate biosynthesis; chorismate biosynthesis; chorismate from D-erythrose 4-phosphate and phosphoenolpyruvate: step 2/7. Functionally, catalyzes the conversion of 3-deoxy-D-arabino-heptulosonate 7-phosphate (DAHP) to dehydroquinate (DHQ). The polypeptide is 3-dehydroquinate synthase (Pyrobaculum islandicum (strain DSM 4184 / JCM 9189 / GEO3)).